We begin with the raw amino-acid sequence, 389 residues long: Dual-specificity RNA methyltransferase RlmN (389 aa).

Catalysis depends on glutamate 110, which acts as the Proton acceptor. Positions 116 to 355 (EKDRATLCVS…TIVRKTRGDD (240 aa)) constitute a Radical SAM core domain. The cysteines at positions 123 and 360 are disulfide-linked. Cysteine 130, cysteine 134, and cysteine 137 together coordinate [4Fe-4S] cluster. S-adenosyl-L-methionine is bound by residues 184 to 185 (GE), serine 216, 238 to 240 (SLH), and asparagine 317. Cysteine 360 serves as the catalytic S-methylcysteine intermediate.

The protein belongs to the radical SAM superfamily. RlmN family. [4Fe-4S] cluster is required as a cofactor.

The protein resides in the cytoplasm. It carries out the reaction adenosine(2503) in 23S rRNA + 2 reduced [2Fe-2S]-[ferredoxin] + 2 S-adenosyl-L-methionine = 2-methyladenosine(2503) in 23S rRNA + 5'-deoxyadenosine + L-methionine + 2 oxidized [2Fe-2S]-[ferredoxin] + S-adenosyl-L-homocysteine. The catalysed reaction is adenosine(37) in tRNA + 2 reduced [2Fe-2S]-[ferredoxin] + 2 S-adenosyl-L-methionine = 2-methyladenosine(37) in tRNA + 5'-deoxyadenosine + L-methionine + 2 oxidized [2Fe-2S]-[ferredoxin] + S-adenosyl-L-homocysteine. Its function is as follows. Specifically methylates position 2 of adenine 2503 in 23S rRNA and position 2 of adenine 37 in tRNAs. m2A2503 modification seems to play a crucial role in the proofreading step occurring at the peptidyl transferase center and thus would serve to optimize ribosomal fidelity. The chain is Dual-specificity RNA methyltransferase RlmN from Erwinia tasmaniensis (strain DSM 17950 / CFBP 7177 / CIP 109463 / NCPPB 4357 / Et1/99).